A 140-amino-acid chain; its full sequence is CBS domain-containing protein YhcV (140 aa).

2 consecutive CBS domains span residues 8 to 64 and 72 to 127; these read MTTQ…GRDG and MSTE…NESA.

This Bacillus subtilis (strain 168) protein is CBS domain-containing protein YhcV (yhcV).